The following is a 438-amino-acid chain: Serine hydroxymethyltransferase (438 aa).

(6S)-5,6,7,8-tetrahydrofolate is bound by residues leucine 119 and 123–125 (GHL). The residue at position 228 (lysine 228) is an N6-(pyridoxal phosphate)lysine. 370–372 (SPF) serves as a coordination point for (6S)-5,6,7,8-tetrahydrofolate.

The protein belongs to the SHMT family. In terms of assembly, homodimer. Pyridoxal 5'-phosphate serves as cofactor.

Its subcellular location is the cytoplasm. It catalyses the reaction (6R)-5,10-methylene-5,6,7,8-tetrahydrofolate + glycine + H2O = (6S)-5,6,7,8-tetrahydrofolate + L-serine. It participates in one-carbon metabolism; tetrahydrofolate interconversion. Its pathway is amino-acid biosynthesis; glycine biosynthesis; glycine from L-serine: step 1/1. In terms of biological role, catalyzes the reversible interconversion of serine and glycine with tetrahydrofolate (THF) serving as the one-carbon carrier. This reaction serves as the major source of one-carbon groups required for the biosynthesis of purines, thymidylate, methionine, and other important biomolecules. Also exhibits THF-independent aldolase activity toward beta-hydroxyamino acids, producing glycine and aldehydes, via a retro-aldol mechanism. The polypeptide is Serine hydroxymethyltransferase (Chlorobium chlorochromatii (strain CaD3)).